Consider the following 182-residue polypeptide: Large ribosomal subunit protein uL16 (182 aa).

Belongs to the universal ribosomal protein uL16 family.

This chain is Large ribosomal subunit protein uL16, found in Pyrobaculum islandicum (strain DSM 4184 / JCM 9189 / GEO3).